Here is a 382-residue protein sequence, read N- to C-terminus: Type II secretion system protein L (382 aa).

The Cytoplasmic segment spans residues methionine 1–arginine 233. The helical transmembrane segment at proline 234 to alanine 254 threads the bilayer. Residues tryptophan 255–glycine 382 lie on the Periplasmic side of the membrane.

This sequence belongs to the GSP L family. Type II secretion system is composed of four main components: the outer membrane complex, the inner membrane complex, the cytoplasmic secretion ATPase and the periplasm-spanning pseudopilus. Forms homodimers. Interacts with XcpZ/GspM. Interacts with XcpR/GspE and XcpS/GspF.

It localises to the cell inner membrane. Its function is as follows. Inner membrane component of the type II secretion system required for the energy-dependent secretion of extracellular factors such as proteases and toxins from the periplasm. Plays a role in the complex assembly and recruits XcpZ resulting in a stable complex in the inner membrane. Provides thus a link between the energy-providing XcpR protein in the cytoplasm and the rest of the T2SS machinery. The protein is Type II secretion system protein L (xcpY) of Pseudomonas aeruginosa (strain ATCC 15692 / DSM 22644 / CIP 104116 / JCM 14847 / LMG 12228 / 1C / PRS 101 / PAO1).